We begin with the raw amino-acid sequence, 78 residues long: Large ribosomal subunit protein bL28 (78 aa).

The disordered stretch occupies residues 1–25 (MSRVCQVTGKRPAVGNNRSHAKNAT).

This sequence belongs to the bacterial ribosomal protein bL28 family.

The polypeptide is Large ribosomal subunit protein bL28 (Aliivibrio fischeri (strain ATCC 700601 / ES114) (Vibrio fischeri)).